A 260-amino-acid chain; its full sequence is MTRNENVEENLSVRVRDLNLWYGDHQALKDISIDIFANTVTALIGPSGCGKSTFLRCLNRMNDLINSVSIKGLVEMDGHDVNARGMDEVALRRRVGMVFQKPNPFPKSIYENVAYAPRMHDMVSRKADQDELVERALRDAGLWNEVKDKLHEPGTSLSGGQQQRLCIARAIAVRPDVILMDEPTSALDPISTATIEDLMDKLKKDFTIVTVTHNMQQAARVADYTAFFHLGEMIEYNATKQMFSNPHTKKAEDYITGRYG.

Positions 13-255 (VRVRDLNLWY…PHTKKAEDYI (243 aa)) constitute an ABC transporter domain. Residue 45–52 (GPSGCGKS) participates in ATP binding.

It belongs to the ABC transporter superfamily. Phosphate importer (TC 3.A.1.7) family. The complex is composed of two ATP-binding proteins (PstB), two transmembrane proteins (PstC and PstA) and a solute-binding protein (PstS).

Its subcellular location is the cell inner membrane. It catalyses the reaction phosphate(out) + ATP + H2O = ADP + 2 phosphate(in) + H(+). Functionally, part of the ABC transporter complex PstSACB involved in phosphate import. Responsible for energy coupling to the transport system. The polypeptide is Phosphate import ATP-binding protein PstB 1 (Chromohalobacter salexigens (strain ATCC BAA-138 / DSM 3043 / CIP 106854 / NCIMB 13768 / 1H11)).